Consider the following 284-residue polypeptide: MPFSRLFGKKEKNQMDDIVEEGVQRVQELPMDKIFPNQFQPRTVFDQDKIDELARTIRIHGVIQPIVVREMEPDYYEIIAGERRFRAVLSLEMEKIPAIIQNLDDEEVAAIALIENLQREELTPIEEAKAYRSLLDMQDVTQEALAQRVGKSQSAIANKMRLLKLPETVQEAVLNKQISERHARSLLALETEEQQVAILAEIAENHWNVKQTEARIQEILGVKKPVATKKTKPKRQAISRDVRIAMNTIKQSVTMVKDNGMDLDFTEEETDDFYQITIQIPKKK.

The H-T-H motif DNA-binding region spans 143 to 162 (EALAQRVGKSQSAIANKMRL).

The protein belongs to the ParB family.

Its subcellular location is the cytoplasm. The protein localises to the nucleoid. In terms of biological role, effects nucleoid occlusion by binding relatively nonspecifically to DNA and preventing the assembly of the division machinery in the vicinity of the nucleoid, especially under conditions that disturb the cell cycle. It helps to coordinate cell division and chromosome segregation by preventing the formation of the Z ring through the nucleoid, which would cause chromosome breakage. This is Nucleoid occlusion protein from Listeria monocytogenes serotype 4b (strain CLIP80459).